Consider the following 279-residue polypeptide: uncharacterized protein (279 aa).

The 58-residue stretch at 14–71 (ITPNQIKLLIALHKTKSQNEAAKLLNIKPSSFNIQLKRLENKLGVKLYYSSPNGTVLT) folds into the HTH lysR-type domain. Positions 31–50 (QNEAAKLLNIKPSSFNIQLK) form a DNA-binding region, H-T-H motif.

This sequence belongs to the LysR transcriptional regulatory family.

This is an uncharacterized protein from Methanocaldococcus jannaschii (strain ATCC 43067 / DSM 2661 / JAL-1 / JCM 10045 / NBRC 100440) (Methanococcus jannaschii).